Consider the following 472-residue polypeptide: UDP-N-acetylmuramate--L-alanine ligase (472 aa).

119–125 (GTHGKTT) contacts ATP.

It belongs to the MurCDEF family.

It localises to the cytoplasm. It catalyses the reaction UDP-N-acetyl-alpha-D-muramate + L-alanine + ATP = UDP-N-acetyl-alpha-D-muramoyl-L-alanine + ADP + phosphate + H(+). Its pathway is cell wall biogenesis; peptidoglycan biosynthesis. Functionally, cell wall formation. This is UDP-N-acetylmuramate--L-alanine ligase from Caulobacter sp. (strain K31).